A 293-amino-acid chain; its full sequence is Formamidopyrimidine-DNA glycosylase (293 aa).

Residue P2 is the Schiff-base intermediate with DNA of the active site. The active-site Proton donor is E3. Residue K58 is the Proton donor; for beta-elimination activity of the active site. DNA-binding residues include H104, R123, and R166. The FPG-type zinc finger occupies 257 to 293 (KVYDREGEPCPTLRCKGHVQRIVQAGRSTFFCATCQR). R283 serves as the catalytic Proton donor; for delta-elimination activity.

The protein belongs to the FPG family. As to quaternary structure, monomer. Requires Zn(2+) as cofactor.

It catalyses the reaction Hydrolysis of DNA containing ring-opened 7-methylguanine residues, releasing 2,6-diamino-4-hydroxy-5-(N-methyl)formamidopyrimidine.. The enzyme catalyses 2'-deoxyribonucleotide-(2'-deoxyribose 5'-phosphate)-2'-deoxyribonucleotide-DNA = a 3'-end 2'-deoxyribonucleotide-(2,3-dehydro-2,3-deoxyribose 5'-phosphate)-DNA + a 5'-end 5'-phospho-2'-deoxyribonucleoside-DNA + H(+). Involved in base excision repair of DNA damaged by oxidation or by mutagenic agents. Acts as a DNA glycosylase that recognizes and removes damaged bases. Has a preference for oxidized purines, such as 7,8-dihydro-8-oxoguanine (8-oxoG). Has AP (apurinic/apyrimidinic) lyase activity and introduces nicks in the DNA strand. Cleaves the DNA backbone by beta-delta elimination to generate a single-strand break at the site of the removed base with both 3'- and 5'-phosphates. In Azorhizobium caulinodans (strain ATCC 43989 / DSM 5975 / JCM 20966 / LMG 6465 / NBRC 14845 / NCIMB 13405 / ORS 571), this protein is Formamidopyrimidine-DNA glycosylase.